A 577-amino-acid chain; its full sequence is Proline--tRNA ligase (577 aa).

The protein belongs to the class-II aminoacyl-tRNA synthetase family. ProS type 1 subfamily. In terms of assembly, homodimer.

The protein resides in the cytoplasm. The enzyme catalyses tRNA(Pro) + L-proline + ATP = L-prolyl-tRNA(Pro) + AMP + diphosphate. Functionally, catalyzes the attachment of proline to tRNA(Pro) in a two-step reaction: proline is first activated by ATP to form Pro-AMP and then transferred to the acceptor end of tRNA(Pro). As ProRS can inadvertently accommodate and process non-cognate amino acids such as alanine and cysteine, to avoid such errors it has two additional distinct editing activities against alanine. One activity is designated as 'pretransfer' editing and involves the tRNA(Pro)-independent hydrolysis of activated Ala-AMP. The other activity is designated 'posttransfer' editing and involves deacylation of mischarged Ala-tRNA(Pro). The misacylated Cys-tRNA(Pro) is not edited by ProRS. The polypeptide is Proline--tRNA ligase (Chlamydia caviae (strain ATCC VR-813 / DSM 19441 / 03DC25 / GPIC) (Chlamydophila caviae)).